Here is a 428-residue protein sequence, read N- to C-terminus: Serine--tRNA ligase (428 aa).

231 to 233 (TAE) lines the L-serine pocket. Residues 262–264 (RRE) and Val278 each bind ATP. Glu285 contributes to the L-serine binding site. Residue 349-352 (EVSS) coordinates ATP. L-serine is bound at residue Ser384.

This sequence belongs to the class-II aminoacyl-tRNA synthetase family. Type-1 seryl-tRNA synthetase subfamily. Homodimer. The tRNA molecule binds across the dimer.

The protein localises to the cytoplasm. It catalyses the reaction tRNA(Ser) + L-serine + ATP = L-seryl-tRNA(Ser) + AMP + diphosphate + H(+). It carries out the reaction tRNA(Sec) + L-serine + ATP = L-seryl-tRNA(Sec) + AMP + diphosphate + H(+). Its pathway is aminoacyl-tRNA biosynthesis; selenocysteinyl-tRNA(Sec) biosynthesis; L-seryl-tRNA(Sec) from L-serine and tRNA(Sec): step 1/1. In terms of biological role, catalyzes the attachment of serine to tRNA(Ser). Is also able to aminoacylate tRNA(Sec) with serine, to form the misacylated tRNA L-seryl-tRNA(Sec), which will be further converted into selenocysteinyl-tRNA(Sec). This chain is Serine--tRNA ligase, found in Chlamydia trachomatis serovar L2 (strain ATCC VR-902B / DSM 19102 / 434/Bu).